The sequence spans 386 residues: RNA polymerase sigma factor SigA (386 aa).

Residues 154–224 are sigma-70 factor domain-2; it reads LAEANLRLVV…TRAIADQART (71 aa). An Interaction with polymerase core subunit RpoC motif is present at residues 178–181; that stretch reads DLIQ. The segment at 233-309 is sigma-70 factor domain-3; sequence ETINKLIRVQ…DDVIESPVDY (77 aa). The sigma-70 factor domain-4 stretch occupies residues 322–375; the sequence is VMDTLTDREENVLRMRFGLDDGRMHTLEDVGKQFKVTRERIRQIEAKAIKKLRH. The segment at residues 348–367 is a DNA-binding region (H-T-H motif); that stretch reads LEDVGKQFKVTRERIRQIEA.

It belongs to the sigma-70 factor family. RpoD/SigA subfamily. In terms of assembly, interacts transiently with the RNA polymerase catalytic core.

It localises to the cytoplasm. In terms of biological role, sigma factors are initiation factors that promote the attachment of RNA polymerase to specific initiation sites and are then released. This sigma factor is the primary sigma factor during exponential growth. This Lactococcus lactis subsp. lactis (strain IL1403) (Streptococcus lactis) protein is RNA polymerase sigma factor SigA.